Here is a 192-residue protein sequence, read N- to C-terminus: Ribosomal RNA small subunit methyltransferase G (192 aa).

Residues Gly63, Leu68, 112 to 113, and Arg125 each bind S-adenosyl-L-methionine; that span reads IE.

This sequence belongs to the methyltransferase superfamily. RNA methyltransferase RsmG family.

The protein resides in the cytoplasm. The catalysed reaction is guanosine(527) in 16S rRNA + S-adenosyl-L-methionine = N(7)-methylguanosine(527) in 16S rRNA + S-adenosyl-L-homocysteine. Specifically methylates the N7 position of guanine in position 527 of 16S rRNA. The chain is Ribosomal RNA small subunit methyltransferase G from Rickettsia africae (strain ESF-5).